A 412-amino-acid chain; its full sequence is Short-chain specific acyl-CoA dehydrogenase, mitochondrial (412 aa).

Residues M1–R24 constitute a mitochondrion transit peptide. Position 27 is a phosphothreonine (T27). K51 is subject to N6-acetyllysine; alternate. K51 carries the post-translational modification N6-succinyllysine; alternate. At K72 the chain carries N6-acetyllysine. K129 is modified (N6-acetyllysine; alternate). N6-succinyllysine; alternate is present on K129. FAD-binding positions include F152–S161 and W185–T187. S161 provides a ligand contact to substrate. Residue K208 is modified to N6-acetyllysine. Residue K262 is modified to N6-acetyllysine; alternate. K262 is modified (N6-succinyllysine; alternate). D269–R272 contacts substrate. At K292 the chain carries N6-acetyllysine. Position 297 (R297) interacts with FAD. K306 is modified (N6-acetyllysine; alternate). K306 carries the N6-succinyllysine; alternate modification. FAD-binding positions include Q308 and Q365 to G369. Catalysis depends on E392, which acts as the Proton acceptor. G393 contributes to the substrate binding site. An FAD-binding site is contributed by T394 to E396.

It belongs to the acyl-CoA dehydrogenase family. In terms of assembly, homotetramer. The cofactor is FAD.

The protein resides in the mitochondrion matrix. The enzyme catalyses a short-chain 2,3-saturated fatty acyl-CoA + oxidized [electron-transfer flavoprotein] + H(+) = a short-chain (2E)-enoyl-CoA + reduced [electron-transfer flavoprotein]. The catalysed reaction is butanoyl-CoA + oxidized [electron-transfer flavoprotein] + H(+) = (2E)-butenoyl-CoA + reduced [electron-transfer flavoprotein]. It catalyses the reaction pentanoyl-CoA + oxidized [electron-transfer flavoprotein] + H(+) = (2E)-pentenoyl-CoA + reduced [electron-transfer flavoprotein]. It carries out the reaction hexanoyl-CoA + oxidized [electron-transfer flavoprotein] + H(+) = (2E)-hexenoyl-CoA + reduced [electron-transfer flavoprotein]. It participates in lipid metabolism; mitochondrial fatty acid beta-oxidation. Short-chain specific acyl-CoA dehydrogenase is one of the acyl-CoA dehydrogenases that catalyze the first step of mitochondrial fatty acid beta-oxidation, an aerobic process breaking down fatty acids into acetyl-CoA and allowing the production of energy from fats. The first step of fatty acid beta-oxidation consists in the removal of one hydrogen from C-2 and C-3 of the straight-chain fatty acyl-CoA thioester, resulting in the formation of trans-2-enoyl-CoA. Among the different mitochondrial acyl-CoA dehydrogenases, short-chain specific acyl-CoA dehydrogenase acts specifically on acyl-CoAs with saturated 4 to 6 carbons long primary chains. This Mus musculus (Mouse) protein is Short-chain specific acyl-CoA dehydrogenase, mitochondrial (Acads).